The primary structure comprises 254 residues: Thiazole synthase (254 aa).

Residue lysine 95 is the Schiff-base intermediate with DXP of the active site. Residues glycine 156, 182 to 183 (AG), and 204 to 205 (NT) contribute to the 1-deoxy-D-xylulose 5-phosphate site.

Belongs to the ThiG family. In terms of assembly, homotetramer. Forms heterodimers with either ThiH or ThiS.

Its subcellular location is the cytoplasm. It catalyses the reaction [ThiS sulfur-carrier protein]-C-terminal-Gly-aminoethanethioate + 2-iminoacetate + 1-deoxy-D-xylulose 5-phosphate = [ThiS sulfur-carrier protein]-C-terminal Gly-Gly + 2-[(2R,5Z)-2-carboxy-4-methylthiazol-5(2H)-ylidene]ethyl phosphate + 2 H2O + H(+). It participates in cofactor biosynthesis; thiamine diphosphate biosynthesis. Functionally, catalyzes the rearrangement of 1-deoxy-D-xylulose 5-phosphate (DXP) to produce the thiazole phosphate moiety of thiamine. Sulfur is provided by the thiocarboxylate moiety of the carrier protein ThiS. In vitro, sulfur can be provided by H(2)S. The protein is Thiazole synthase of Shewanella sp. (strain W3-18-1).